We begin with the raw amino-acid sequence, 590 residues long: Aspartate--tRNA(Asp/Asn) ligase (590 aa).

Residue E175 coordinates L-aspartate. Residues 199 to 202 (QQYK) form an aspartate region. Residues R221 and H450 each coordinate L-aspartate. 221-223 (RDE) is a binding site for ATP. E484 provides a ligand contact to ATP. Residue R491 coordinates L-aspartate. Residue 536 to 539 (GVDR) coordinates ATP.

It belongs to the class-II aminoacyl-tRNA synthetase family. Type 1 subfamily. Homodimer.

It localises to the cytoplasm. It carries out the reaction tRNA(Asx) + L-aspartate + ATP = L-aspartyl-tRNA(Asx) + AMP + diphosphate. In terms of biological role, aspartyl-tRNA synthetase with relaxed tRNA specificity since it is able to aspartylate not only its cognate tRNA(Asp) but also tRNA(Asn). Reaction proceeds in two steps: L-aspartate is first activated by ATP to form Asp-AMP and then transferred to the acceptor end of tRNA(Asp/Asn). This Rhodopseudomonas palustris (strain BisB5) protein is Aspartate--tRNA(Asp/Asn) ligase.